We begin with the raw amino-acid sequence, 351 residues long: Foldase protein PrsA 1 (351 aa).

The N-terminal stretch at methionine 1–alanine 22 is a signal peptide. Residue cysteine 23 is the site of N-palmitoyl cysteine attachment. A lipid anchor (S-diacylglycerol cysteine) is attached at cysteine 23. The PpiC domain maps to threonine 145–lysine 240. Low complexity-rich tracts occupy residues lysine 303–serine 317 and glutamate 326–glutamine 351. Residues lysine 303–glutamine 351 are disordered.

It belongs to the PrsA family.

It is found in the cell membrane. The catalysed reaction is [protein]-peptidylproline (omega=180) = [protein]-peptidylproline (omega=0). Plays a major role in protein secretion by helping the post-translocational extracellular folding of several secreted proteins. This chain is Foldase protein PrsA 1, found in Streptococcus pyogenes serotype M6 (strain ATCC BAA-946 / MGAS10394).